The primary structure comprises 525 residues: Protein disulfide-isomerase A2 (525 aa).

The N-terminal stretch at 1 to 21 (MSRQLLPVLLLLLLRASCPWG) is a signal peptide. The Thioredoxin 1 domain maps to 27–152 (RSPSEEPPEE…IAEWLRRRVG (126 aa)). Residues Cys71 and Cys74 each act as nucleophile in the active site. Residues Cys71 and Cys74 are joined by a disulfide bond. 2 N-linked (GlcNAc...) asparagine glycosylation sites follow: Asn127 and Asn284. The 130-residue stretch at 367–496 (VLNGQVKPYL…FSKFLDNGGV (130 aa)) folds into the Thioredoxin 2 domain. Catalysis depends on nucleophile residues Cys418 and Cys421. A disulfide bond links Cys418 and Cys421. The segment at 492 to 525 (DNGGVLPTEEPPEEPAAPFPEPPANSTMGSKEEL) is disordered. Over residues 505 to 514 (EPAAPFPEPP) the composition is skewed to pro residues. N-linked (GlcNAc...) asparagine glycosylation is present at Asn516. Over residues 516-525 (NSTMGSKEEL) the composition is skewed to polar residues. Residues 522–525 (KEEL) carry the Prevents secretion from ER motif.

The protein belongs to the protein disulfide isomerase family. In terms of assembly, monomer; predominantly as monomer under reducing conditions. Homodimer; disulfide-linked. Part of a large chaperone multiprotein complex comprising DNAJB11, HSP90B1, HSPA5, HYOU, PDIA2, PDIA4, PDIA6, PPIB, SDF2L1, UGGT1 and very small amounts of ERP29, but not, or at very low levels, CALR nor CANX. Post-translationally, the disulfide-linked homodimer exhibits an enhanced chaperone activity. Glycosylated. As to expression, highly expressed in pancreas (at protein level).

The protein resides in the endoplasmic reticulum lumen. It carries out the reaction Catalyzes the rearrangement of -S-S- bonds in proteins.. Acts as an intracellular estrogen-binding protein. May be involved in modulating cellular levels and biological functions of estrogens in the pancreas. May act as a chaperone that inhibits aggregation of misfolded proteins. The protein is Protein disulfide-isomerase A2 (PDIA2) of Homo sapiens (Human).